The following is a 781-amino-acid chain: Probable aminopeptidase 2 (781 aa).

Residues glutamate 105 and 237 to 241 contribute to the substrate site; that span reads GAMEN. Histidine 272 is a binding site for Zn(2+). The active-site Proton acceptor is the glutamate 273. The Zn(2+) site is built by histidine 276 and glutamate 295.

Belongs to the peptidase M1 family. It depends on Zn(2+) as a cofactor.

Its subcellular location is the cytoplasm. The protein is Probable aminopeptidase 2 (ape2) of Sulfurisphaera tokodaii (strain DSM 16993 / JCM 10545 / NBRC 100140 / 7) (Sulfolobus tokodaii).